Consider the following 656-residue polypeptide: Protein arginine N-methyltransferase 7 (656 aa).

2 SAM-dependent MTase PRMT-type domains span residues glutamate 12–tryptophan 338 and glycine 343–asparagine 656.

Belongs to the class I-like SAM-binding methyltransferase superfamily. Protein arginine N-methyltransferase family. PRMT7 subfamily.

In terms of biological role, arginine methyltransferase that can both catalyze the formation of omega-N monomethylarginine (MMA) and symmetrical dimethylarginine (sDMA). This Caenorhabditis briggsae protein is Protein arginine N-methyltransferase 7 (prmt-7).